The following is a 321-amino-acid chain: Beta-lactamase (321 aa).

Positions 1–30 (MEKNRKKQIVVLSIALVCIFILVFSLFHKS) are cleaved as a signal peptide. S83 (acyl-ester intermediate) is an active-site residue. 233–235 (KTG) serves as a coordination point for substrate.

The protein belongs to the class-A beta-lactamase family.

It carries out the reaction a beta-lactam + H2O = a substituted beta-amino acid. Inhibited by clavulanic acid. Can hydrolyze cephalosporins, penicillins and also cefoxitin; but at a slow rate. The chain is Beta-lactamase (cfxA) from Phocaeicola vulgatus (Bacteroides vulgatus).